A 251-amino-acid polypeptide reads, in one-letter code: Flap endonuclease Xni (251 aa).

D104 provides a ligand contact to Mg(2+). Residues 160 to 249 (VQPQQLPDYW…IDGNLQQLRL (90 aa)) enclose the 5'-3' exonuclease domain. K(+)-binding residues include L171, A172, P180, V182, and I185. Positions 184-189 (GIGPKS) are interaction with DNA.

It belongs to the Xni family. Mg(2+) serves as cofactor. The cofactor is K(+).

In terms of biological role, has flap endonuclease activity. During DNA replication, flap endonucleases cleave the 5'-overhanging flap structure that is generated by displacement synthesis when DNA polymerase encounters the 5'-end of a downstream Okazaki fragment. This Escherichia coli O7:K1 (strain IAI39 / ExPEC) protein is Flap endonuclease Xni.